A 190-amino-acid polypeptide reads, in one-letter code: MATKTFSLPFLLIVCIFSQLSSTFGDPSVKDLGQHAGYFSLPRSKSARLFHFFFQSRNNSSDPVVIWLSGGPGCSSSNQRYISYLKISNLIYVDQPIRTGFSYANDSTDLRHDEDSVSNDLYDFLQAFFKEHPNLAKDDFYITGESYAGHYIPALASRVHNGNEKKEGIVINLKVTDISLVTATATWSAG.

A signal peptide spans 1-25; the sequence is MATKTFSLPFLLIVCIFSQLSSTFG. N-linked (GlcNAc...) asparagine glycans are attached at residues Asn58, Asn59, and Asn105.

This sequence belongs to the peptidase S10 family.

It localises to the secreted. The sequence is that of Putative serine carboxypeptidase-like 54 (SCPL54) from Arabidopsis thaliana (Mouse-ear cress).